The sequence spans 522 residues: Nif-specific regulatory protein (522 aa).

Positions 1-184 are a domain; the sequence is MNATIPQRSA…AQTVRLVVNI (184 aa). In terms of domain architecture, GAF spans 37–178; that stretch reads QIDELLEQVL…IVANLLAQTV (142 aa). Residues 211 to 439 form the Sigma-54 factor interaction domain; it reads VVGHTPTMRR…LENCLERSAI (229 aa). ATP is bound by residues 239-246 and 302-311; these read GESGTGKE and ADGGTLFLDE. The segment at 440-479 is inter-domain linker; that stretch reads MSEDGTITRDVVSLTGVDNESPPLAAPLPEVNLADETLDD. The interval 480–522 is C-terminal DNA-binding domain; the sequence is RERVIAALEQAGWVQAKAARLLGMTPRQIAYRIQTLNIHMRKI. Residues 494–513 constitute a DNA-binding region (H-T-H motif); sequence QAKAARLLGMTPRQIAYRIQ.

As to quaternary structure, interacts with sigma-54.

Its function is as follows. Required for activation of most nif operons, which are directly involved in nitrogen fixation. This chain is Nif-specific regulatory protein (nifA), found in Azotobacter vinelandii.